We begin with the raw amino-acid sequence, 999 residues long: Receptor-like protein kinase 5 (999 aa).

Positions 1–14 (MLYCLILLLCLSST) are cleaved as a signal peptide. Residues 15 to 621 (YLPSLSLNQD…LCRKITRSKN (607 aa)) lie on the Extracellular side of the membrane. LRR repeat units lie at residues 90–112 (SLHSLSLYNNSINGSLSADDFDT), 115–137 (NLISLDLSENLLVGSIPKSLPFN), 140–161 (NLKFLEISGNNLSDTIPSSFGE), 164–186 (KLESLNLAGNFLSGTIPASLGNV), and 188–208 (TLKELKLAYNLFSPSQIPSQL). N-linked (GlcNAc...) asparagine glycans are attached at residues Asn-98 and Asn-102. 2 N-linked (GlcNAc...) asparagine glycosylation sites follow: Asn-150 and Asn-185. N-linked (GlcNAc...) asparagine glycosylation occurs at Asn-210. LRR repeat units lie at residues 213–236 (ELQVLWLAGCNLVGPIPPSLSRLT) and 237–259 (SLVNLDLTFNQLTGSIPSWITQL). N-linked (GlcNAc...) asparagine glycans are attached at residues Asn-269 and Asn-282. 12 LRR repeats span residues 285–307 (TLKRFDASMNKLTGKIPDNLNLL), 308–330 (NLESLNLFENMLEGPLPESITRS), 332–353 (TLSELKLFNNRLTGVLPSQLGA), 356–378 (PLQYVDLSYNRFSGEIPANVCGE), 380–402 (KLEYLILIDNSFSGEISNNLGKC), 404–427 (SLTRVRLSNNKLSGQIPHGFWGLP), 428–450 (RLSLLELSDNSFTGSIPKTIIGA), 452–474 (NLSNLRISKNRFSGSIPNEIGSL), 500–523 (QLSRLDLSKNQLSGEIPRELRGWK), 524–546 (NLNELNLANNHLSGEIPKEVGIL), 548–569 (VLNYLDLSSNQFSGEIPLELQN), and 571–593 (KLNVLNLSYNHLSGKIPPLYANK). Residue Asn-452 is glycosylated (N-linked (GlcNAc...) asparagine). A glycan (N-linked (GlcNAc...) asparagine) is linked at Asn-576. Residues 622 to 641 (IGYVWILLTIFLLAGLVFVV) form a helical membrane-spanning segment. Residues 642 to 999 (GIVMFIAKCR…PYYTEDLNSV (358 aa)) are Cytoplasmic-facing. A Protein kinase domain is found at 683 to 968 (LDEKNVIGFG…KVVIMLQEVS (286 aa)). Residues 689-697 (IGFGSSGKV) and Lys-711 contribute to the ATP site. Phosphotyrosine occurs at positions 766 and 806. Asp-819 functions as the Proton acceptor in the catalytic mechanism. Ser-856 bears the Phosphoserine mark. Residues Tyr-864 and Tyr-871 each carry the phosphotyrosine modification. Thr-872 bears the Phosphothreonine mark. The tract at residues 972 to 999 (PCSSPNTSKRSKTGGKLSPYYTEDLNSV) is disordered.

The protein belongs to the protein kinase superfamily. Ser/Thr protein kinase family. Interacts with CST. Binds to IDA. It depends on Mg(2+) as a cofactor. The cofactor is Mn(2+). In terms of processing, autophosphorylated on Ser, Thr and Tyr residues. As to expression, expressed in roots and rosettes. Expressed at the base of petioles and pedicels, and in the abscission zones of the floral organs.

The protein resides in the cell membrane. It catalyses the reaction L-seryl-[protein] + ATP = O-phospho-L-seryl-[protein] + ADP + H(+). The catalysed reaction is L-threonyl-[protein] + ATP = O-phospho-L-threonyl-[protein] + ADP + H(+). It carries out the reaction L-tyrosyl-[protein] + ATP = O-phospho-L-tyrosyl-[protein] + ADP + H(+). Receptor with a dual specificity kinase activity acting on both serine/threonine- and tyrosine-containing substrates that controls floral organ abscission. May interact with the 'INFLORESCENCE DEFICIENT IN ABSCISSION' (IDA) ligands family. The protein is Receptor-like protein kinase 5 (RLK5) of Arabidopsis thaliana (Mouse-ear cress).